The sequence spans 458 residues: ATP synthase subunit beta (458 aa).

An ATP-binding site is contributed by 148–155 (GGAGVGKT).

This sequence belongs to the ATPase alpha/beta chains family. F-type ATPases have 2 components, CF(1) - the catalytic core - and CF(0) - the membrane proton channel. CF(1) has five subunits: alpha(3), beta(3), gamma(1), delta(1), epsilon(1). CF(0) has three main subunits: a(1), b(2) and c(9-12). The alpha and beta chains form an alternating ring which encloses part of the gamma chain. CF(1) is attached to CF(0) by a central stalk formed by the gamma and epsilon chains, while a peripheral stalk is formed by the delta and b chains.

The protein localises to the cell inner membrane. It catalyses the reaction ATP + H2O + 4 H(+)(in) = ADP + phosphate + 5 H(+)(out). In terms of biological role, produces ATP from ADP in the presence of a proton gradient across the membrane. The catalytic sites are hosted primarily by the beta subunits. The polypeptide is ATP synthase subunit beta (Pseudomonas putida (strain GB-1)).